The primary structure comprises 265 residues: MQRYKVTLMYDGTNFAGFQRQPNKRTVESTLTDVVNKMAKQPDPAIVIYGSGRTDAGVHALAQVVHFDFPFLIPADNMRKGLNSMLPMDMEVLKVEEVAPTFHARYDVSGKQYQYRMDMGEFRNPFKRNYTGHWKFPVDLAKINVALADLVGEHDYTSFVASGAQTRTFVRTIYEATCHIDEANHELVFEFYGNGFMYNQVRIMVGVLVEIGSGTRPVHDVLRLYEVKDRKQARRTVPAAGLYLKHVYYQGEDPQHPTKLPQHQR.

Aspartate 55 acts as the Nucleophile in catalysis. Residue tyrosine 113 participates in substrate binding.

The protein belongs to the tRNA pseudouridine synthase TruA family. In terms of assembly, homodimer.

It carries out the reaction uridine(38/39/40) in tRNA = pseudouridine(38/39/40) in tRNA. In terms of biological role, formation of pseudouridine at positions 38, 39 and 40 in the anticodon stem and loop of transfer RNAs. This is tRNA pseudouridine synthase A from Levilactobacillus brevis (strain ATCC 367 / BCRC 12310 / CIP 105137 / JCM 1170 / LMG 11437 / NCIMB 947 / NCTC 947) (Lactobacillus brevis).